Here is a 296-residue protein sequence, read N- to C-terminus: NAD kinase (296 aa).

Residue Asp72 is the Proton acceptor of the active site. NAD(+) contacts are provided by residues Asp72–Gly73, Asn146–Asp147, Arg157, Lys174, Asp176, Thr187–Ser192, and Gln247.

It belongs to the NAD kinase family. Requires a divalent metal cation as cofactor.

It is found in the cytoplasm. It carries out the reaction NAD(+) + ATP = ADP + NADP(+) + H(+). In terms of biological role, involved in the regulation of the intracellular balance of NAD and NADP, and is a key enzyme in the biosynthesis of NADP. Catalyzes specifically the phosphorylation on 2'-hydroxyl of the adenosine moiety of NAD to yield NADP. This Pseudomonas syringae pv. syringae (strain B728a) protein is NAD kinase.